The chain runs to 368 residues: Transcription factor bHLH30 (368 aa).

A coiled-coil region spans residues Ala3–Phe30. The bHLH domain occupies Ala173–Leu222. Residues Lys333–Arg368 are disordered. The span at Glu337–Arg368 shows a compositional bias: polar residues.

Homodimer. Interacts with LHW.

The protein localises to the nucleus. In Arabidopsis thaliana (Mouse-ear cress), this protein is Transcription factor bHLH30 (BHLH30).